The following is a 1118-amino-acid chain: cGMP-specific 3',5'-cyclic phosphodiesterase (1118 aa).

The disordered stretch occupies residues 1–142 (MTDVSSPAGG…KASTTASQQD (142 aa)). Low complexity predominate over residues 18–33 (STTSSSSAATTSASSS). Over residues 34-45 (KPLTNGANKTAI) the composition is skewed to polar residues. Composition is skewed to low complexity over residues 46–56 (STAAGGVTPGA) and 63–72 (GAIPASSSSG). A compositionally biased stretch (polar residues) spans 84-101 (SNNNRPAVTNRSSETKLM). The segment covering 102 to 128 (TPTGSSSSPSQSPSQTQASIQTQTSQQ) has biased composition (low complexity). 2 GAF domains span residues 247–399 (DIDV…GIGI) and 431–612 (NLEC…GLGI). Positions 642–965 (SQDQTEKLTQ…RNWQDLAEKV (324 aa)) constitute a PDEase domain. His-718 (proton donor) is an active-site residue. His-722, His-758, Asp-759, and Asp-869 together coordinate a divalent metal cation. 2 disordered regions span residues 1006–1035 (QQSQ…TGAL) and 1065–1118 (SHVS…CALL). Composition is skewed to basic and acidic residues over residues 1011-1022 (GSEDSHTPEHQR) and 1065-1075 (SHVSEDMDDKS). Low complexity predominate over residues 1084 to 1104 (ASGSMGRMSASSSTSSAGGQM). Residues 1108-1118 (SKKRSKLCALL) are compositionally biased toward basic residues. Cys-1115 is subject to Cysteine methyl ester. Cys-1115 carries S-farnesyl cysteine lipidation. Positions 1116–1118 (ALL) are cleaved as a propeptide — removed in mature form.

Belongs to the cyclic nucleotide phosphodiesterase family. In terms of assembly, interacts with PrBP. Requires a divalent metal cation as cofactor. As to expression, expressed in Malpighian tubule principal cells. Also expressed in adult head.

It is found in the cell membrane. The enzyme catalyses 3',5'-cyclic GMP + H2O = GMP + H(+). Its activity is regulated as follows. Inhibited by sildenafil and zaprinast. Hydrolyzes the second messenger cGMP, which is a key regulator of many important physiological processes. Has cAMP phosphodiesterase activity in vitro but not in vivo. Has a role regulating cGMP transport in Malpighian tubule principal cells. In Drosophila melanogaster (Fruit fly), this protein is cGMP-specific 3',5'-cyclic phosphodiesterase (Pde6).